We begin with the raw amino-acid sequence, 474 residues long: Tocopherol cyclase, chloroplastic (474 aa).

Residues 1–65 (MNLAVAAALP…TPTPQDRSLR (65 aa)) constitute a chloroplast transit peptide.

In terms of tissue distribution, present in all green tissues, both in bundle sheath and in mesophyll cells.

The protein resides in the plastid. It localises to the chloroplast. It carries out the reaction gamma-tocopherol = 2,3-dimethyl-6-phytylbenzene-1,4-diol. Its pathway is cofactor biosynthesis; tocopherol biosynthesis. Involved in the synthesis of tocopherols (vitamin E), which presumably protect photosynthetic complexes from oxidative stress. Catalyzes the conversion of 2,3-dimethyl-5-phytyl-1,4-hydroquinone (DMPQ) to gamma-tocopherol. The protein is Tocopherol cyclase, chloroplastic of Zea mays (Maize).